The sequence spans 87 residues: MNSKVFAVLLLLALSTCVLSEKYCPTPRNTSCKKMNIRNNCCRDSDCTSNAFCCAEPCGNFCHKASDKPGGRRVDPNASCKTGYVYW.

The first 20 residues, 1 to 20, serve as a signal peptide directing secretion; the sequence is MNSKVFAVLLLLALSTCVLS. Residues 21–66 enclose the WAP domain; it reads EKYCPTPRNTSCKKMNIRNNCCRDSDCTSNAFCCAEPCGNFCHKAS. Cystine bridges form between cysteine 24/cysteine 54, cysteine 32/cysteine 58, cysteine 41/cysteine 53, cysteine 42/cysteine 80, and cysteine 47/cysteine 62.

This sequence belongs to the venom protein 11 family. 01 (wap-1) subfamily. In terms of processing, contains 5 disulfide bonds. Expressed by the venom gland.

Its subcellular location is the secreted. In terms of biological role, has antibacterial activity. This is U14-lycotoxin-Ls1b from Lycosa singoriensis (Wolf spider).